The following is a 233-amino-acid chain: Glutathione S-transferase U15 (233 aa).

The region spanning 5 to 85 (EEVKLLGTWY…YIDETWNSSG (81 aa)) is the GST N-terminal domain. Residues 15-16 (SP), 42-43 (SK), 56-57 (KV), and 69-70 (VS) each bind glutathione. In terms of domain architecture, GST C-terminal spans 92–219 (HPYDRALARF…VPDIDKVAKF (128 aa)). Threonine 158 carries the phosphothreonine modification.

Belongs to the GST superfamily. Tau family.

Its subcellular location is the cytoplasm. The protein resides in the cytosol. The enzyme catalyses RX + glutathione = an S-substituted glutathione + a halide anion + H(+). Functionally, may be involved in the conjugation of reduced glutathione to a wide number of exogenous and endogenous hydrophobic electrophiles and have a detoxification role against certain herbicides. In Arabidopsis thaliana (Mouse-ear cress), this protein is Glutathione S-transferase U15 (GSTU15).